The following is a 273-amino-acid chain: Formamidopyrimidine-DNA glycosylase (273 aa).

The active-site Schiff-base intermediate with DNA is Pro-2. Residue Glu-3 is the Proton donor of the active site. Lys-59 (proton donor; for beta-elimination activity) is an active-site residue. Positions 92 and 111 each coordinate DNA. The segment at Lys-239 to Lys-273 adopts an FPG-type zinc-finger fold. Arg-263 acts as the Proton donor; for delta-elimination activity in catalysis.

It belongs to the FPG family. As to quaternary structure, monomer. Zn(2+) serves as cofactor.

It catalyses the reaction Hydrolysis of DNA containing ring-opened 7-methylguanine residues, releasing 2,6-diamino-4-hydroxy-5-(N-methyl)formamidopyrimidine.. The catalysed reaction is 2'-deoxyribonucleotide-(2'-deoxyribose 5'-phosphate)-2'-deoxyribonucleotide-DNA = a 3'-end 2'-deoxyribonucleotide-(2,3-dehydro-2,3-deoxyribose 5'-phosphate)-DNA + a 5'-end 5'-phospho-2'-deoxyribonucleoside-DNA + H(+). Its function is as follows. Involved in base excision repair of DNA damaged by oxidation or by mutagenic agents. Acts as a DNA glycosylase that recognizes and removes damaged bases. Has a preference for oxidized purines, such as 7,8-dihydro-8-oxoguanine (8-oxoG). Has AP (apurinic/apyrimidinic) lyase activity and introduces nicks in the DNA strand. Cleaves the DNA backbone by beta-delta elimination to generate a single-strand break at the site of the removed base with both 3'- and 5'-phosphates. The polypeptide is Formamidopyrimidine-DNA glycosylase (Listeria monocytogenes serotype 4b (strain F2365)).